Here is a 63-residue protein sequence, read N- to C-terminus: Large ribosomal subunit protein uL29 (63 aa).

The protein belongs to the universal ribosomal protein uL29 family.

The chain is Large ribosomal subunit protein uL29 from Vibrio campbellii (strain ATCC BAA-1116).